The sequence spans 759 residues: Short transient receptor potential channel 1 (759 aa).

Residues 1-30 are disordered; it reads MMAALYPSTDLSGASSSSLPSSPSSSSPNE. Over 1 to 352 the chain is Cytoplasmic; sequence MMAALYPSTD…GRIIHTPFMK (352 aa). The segment covering 15-28 has biased composition (low complexity); the sequence is SSSSLPSSPSSSSP. ANK repeat units lie at residues 46-75, 83-112, and 124-153; these read LNEKLFLLACDKGDYYMVKKILEENSSGDL, LGRNAVTITIENENLDILQLLLDYGCQKLM, and MDVAPVILAAHRNNYEILTMLLKQDVSLPK. The helical transmembrane segment at 353–373 threads the bilayer; it reads FIIHGASYFTFLLLLNLYSLV. The Extracellular portion of the chain corresponds to 374–381; sequence YNEDKKNT. A helical membrane pass occupies residues 382 to 402; sequence MGPALERIDYLLILWIIGMIW. The Cytoplasmic segment spans residues 403–461; the sequence is SDIKRLWYEGLEDFLEESRNQLSFVMNSLYLATFALKVVAHNKFHDFADRKDWDAFHPT. A helical membrane pass occupies residues 462–482; the sequence is LVAEGLFAFANVLSYLRLFFM. The Extracellular portion of the chain corresponds to 483-505; it reads YTTSSILGPLQISMGQMLQDFGK. The chain crosses the membrane as a helical span at residues 506-526; sequence FLGMFLLVLFSFTIGLTQLYD. At 527-552 the chain is on the cytoplasmic side; it reads KGYTPKEQKDCVGIFCEQQSNDTFHS. A helical transmembrane segment spans residues 553-573; that stretch reads FIGTCFALFWYIFSLAHVAIF. Topologically, residues 574–582 are extracellular; that stretch reads VTRFSYGEE. A helical membrane pass occupies residues 583-603; the sequence is LQSFVGAVIVGTYNVVVVIVL. Over 604–759 the chain is Cytoplasmic; sequence TKLLVAMLHK…SKYAMFYPRN (156 aa).

It belongs to the transient receptor (TC 1.A.4) family. STrpC subfamily. TRPC1 sub-subfamily. Homotetramer and heterotetramer with TRPC4 and/or TRPC5. Interacts with TRPC4 and TRPC5. Interacts with ITPR3. Interacts with MX1 and RNF24. Interacts with FKBP4. Interacts with TRPC4AP. Interacts with PLSCR1. Interacts with PKD2L2. Forms a heterotetramer with PKD2 with a 2:2 stoichiometry; has distinct channel properties separate from PKD2 or TRPC1 homomers alone. Activation of PRKCA induces phosphorylation of TRPC1 and subsequent Ca2+ entry into cells.

It is found in the cell membrane. It carries out the reaction Ca(2+)(in) = Ca(2+)(out). Functionally, forms a receptor-activated non-selective calcium permeant cation channel. Probably is operated by a phosphatidylinositol second messenger system activated by receptor tyrosine kinases or G-protein coupled receptors. Also activated by intracellular calcium store depletion. This Oryctolagus cuniculus (Rabbit) protein is Short transient receptor potential channel 1 (TRPC1).